Reading from the N-terminus, the 468-residue chain is UDP-N-acetylmuramate--L-alanine ligase (468 aa).

117-123 (GTHGKTT) is an ATP binding site.

It belongs to the MurCDEF family.

It is found in the cytoplasm. It carries out the reaction UDP-N-acetyl-alpha-D-muramate + L-alanine + ATP = UDP-N-acetyl-alpha-D-muramoyl-L-alanine + ADP + phosphate + H(+). It functions in the pathway cell wall biogenesis; peptidoglycan biosynthesis. In terms of biological role, cell wall formation. The chain is UDP-N-acetylmuramate--L-alanine ligase from Maricaulis maris (strain MCS10) (Caulobacter maris).